We begin with the raw amino-acid sequence, 176 residues long: Adipose-secreted signaling protein (176 aa).

The disordered stretch occupies residues 1–30 (MATAGKGSKGKGTGVRFTPEGTQGHPQEGT). The span at 20–30 (EGTQGHPQEGT) shows a compositional bias: polar residues.

It belongs to the ADISSP family.

Its function is as follows. May be involved in thermogenesis and glucose homeostasis. This chain is Adipose-secreted signaling protein, found in Taeniopygia guttata (Zebra finch).